The chain runs to 143 residues: Large ribosomal subunit protein uL11 (143 aa).

It belongs to the universal ribosomal protein uL11 family. Part of the ribosomal stalk of the 50S ribosomal subunit. Interacts with L10 and the large rRNA to form the base of the stalk. L10 forms an elongated spine to which 2 L12 dimers bind in a sequential fashion forming a pentameric L10(L12)2(L12)2 complex. Post-translationally, one or more lysine residues are methylated.

Its function is as follows. Forms part of the ribosomal stalk which helps the ribosome interact with GTP-bound translation factors. This chain is Large ribosomal subunit protein uL11, found in Agrobacterium fabrum (strain C58 / ATCC 33970) (Agrobacterium tumefaciens (strain C58)).